Reading from the N-terminus, the 262-residue chain is L-aspartate dehydrogenase (262 aa).

The NAD(+) site is built by Ala128 and Asn183. Residue His213 is part of the active site.

Belongs to the L-aspartate dehydrogenase family.

The catalysed reaction is L-aspartate + NADP(+) + H2O = oxaloacetate + NH4(+) + NADPH + H(+). It carries out the reaction L-aspartate + NAD(+) + H2O = oxaloacetate + NH4(+) + NADH + H(+). Its pathway is cofactor biosynthesis; NAD(+) biosynthesis; iminoaspartate from L-aspartate (dehydrogenase route): step 1/1. In terms of biological role, specifically catalyzes the NAD or NADP-dependent dehydrogenation of L-aspartate to iminoaspartate. This is L-aspartate dehydrogenase from Methanopyrus kandleri (strain AV19 / DSM 6324 / JCM 9639 / NBRC 100938).